A 1347-amino-acid polypeptide reads, in one-letter code: Agglutinin-like protein 5 (1347 aa).

An N-terminal signal peptide occupies residues 1–19 (MIQQFTLLFLYLSFATAKA). 4 disulfide bridges follow: cysteine 73-cysteine 150, cysteine 96-cysteine 112, cysteine 205-cysteine 298, and cysteine 227-cysteine 256. ALS repeat units follow at residues 365 to 396 (TTIT…VDVP), 401 to 432 (TTVT…VQVP), 438 to 469 (TTTT…VREP), 474 to 505 (VTTT…VREP), 510 to 541 (VTTT…IKEP), and 546 to 577 (VTTT…IHDP). 3 disordered regions span residues 580–678 (ESSS…WDSS), 704–725 (VSNS…SNTS), and 789–813 (SDPT…FSDE). N-linked (GlcNAc...) asparagine glycosylation is found at asparagine 593 and asparagine 723. Asparagine 847 carries an N-linked (GlcNAc...) asparagine glycan. Disordered regions lie at residues 855–896 (ESES…STVT), 909–964 (TGMP…KSSV), 977–1021 (SETS…KESS), 1062–1111 (EDNE…VSSL), and 1139–1180 (ATSL…NRLS). Low complexity-rich tracts occupy residues 856–870 (SESS…ASES), 879–896 (SEST…STVT), and 921–939 (TSDV…PTSA). Positions 940 to 950 (EQSITDNPNID) are enriched in polar residues. Low complexity-rich tracts occupy residues 951-964 (SSQT…KSSV) and 977-1002 (SETS…NSDT). 2 stretches are compositionally biased toward polar residues: residues 1003 to 1021 (GNIN…KESS) and 1066 to 1088 (PNTF…SVLS). Composition is skewed to low complexity over residues 1097–1111 (IKTS…VSSL) and 1140–1158 (TSLR…SSGT). 2 N-linked (GlcNAc...) asparagine glycosylation sites follow: asparagine 1229 and asparagine 1254. The GPI-anchor amidated serine moiety is linked to residue serine 1326. Positions 1327–1347 (SATKHPSWLLKFISVALFFFL) are cleaved as a propeptide — removed in mature form.

The protein belongs to the ALS family. Forms homodimers through the tandem repeats. Aggregates in amyloid-like structures, with self-propagating secondary-structure changes, amyloid-characteristic dye binding, and induced birefringence. In terms of processing, the GPI-anchor is attached to the protein in the endoplasmic reticulum and serves to target the protein to the cell surface. There, the glucosamine-inositol phospholipid moiety is cleaved off and the GPI-modified mannoprotein is covalently attached via its lipidless GPI glycan remnant to the 1,6-beta-glucan of the outer cell wall layer.

It is found in the cell membrane. Its subcellular location is the secreted. It localises to the cell wall. In terms of biological role, cell surface adhesion protein which mediates both yeast-to-host tissue adherence and yeast aggregation. Plays an important role in the pathogenesis of C.albicans infections. Forms amyloid structures, essential for cell-cell association and cell-substrate adhesion to polystyrene. The chain is Agglutinin-like protein 5 (ALS5) from Candida albicans (strain SC5314 / ATCC MYA-2876) (Yeast).